Consider the following 556-residue polypeptide: Oxygen-dependent choline dehydrogenase (556 aa).

Residue 4 to 33 (DYIIIGAGSAGNVLATRLTEDPNTTVLLLE) coordinates FAD. The Proton acceptor role is filled by His-473.

The protein belongs to the GMC oxidoreductase family. It depends on FAD as a cofactor.

It carries out the reaction choline + A = betaine aldehyde + AH2. The catalysed reaction is betaine aldehyde + NAD(+) + H2O = glycine betaine + NADH + 2 H(+). It participates in amine and polyamine biosynthesis; betaine biosynthesis via choline pathway; betaine aldehyde from choline (cytochrome c reductase route): step 1/1. Its function is as follows. Involved in the biosynthesis of the osmoprotectant glycine betaine. Catalyzes the oxidation of choline to betaine aldehyde and betaine aldehyde to glycine betaine at the same rate. This chain is Oxygen-dependent choline dehydrogenase, found in Escherichia coli O17:K52:H18 (strain UMN026 / ExPEC).